The following is a 168-amino-acid chain: ATP synthase subunit b (168 aa).

The chain crosses the membrane as a helical span at residues 7-26 (FVLSNFIFTLINLWIMYWVL).

The protein belongs to the ATPase B chain family. In terms of assembly, F-type ATPases have 2 components, F(1) - the catalytic core - and F(0) - the membrane proton channel. F(1) has five subunits: alpha(3), beta(3), gamma(1), delta(1), epsilon(1). F(0) has three main subunits: a(1), b(2) and c(10-14). The alpha and beta chains form an alternating ring which encloses part of the gamma chain. F(1) is attached to F(0) by a central stalk formed by the gamma and epsilon chains, while a peripheral stalk is formed by the delta and b chains.

It localises to the cell membrane. Functionally, f(1)F(0) ATP synthase produces ATP from ADP in the presence of a proton or sodium gradient. F-type ATPases consist of two structural domains, F(1) containing the extramembraneous catalytic core and F(0) containing the membrane proton channel, linked together by a central stalk and a peripheral stalk. During catalysis, ATP synthesis in the catalytic domain of F(1) is coupled via a rotary mechanism of the central stalk subunits to proton translocation. Component of the F(0) channel, it forms part of the peripheral stalk, linking F(1) to F(0). The polypeptide is ATP synthase subunit b (Alkaliphilus metalliredigens (strain QYMF)).